Reading from the N-terminus, the 357-residue chain is Dynein axonemal assembly factor 10 (357 aa).

WD repeat units follow at residues Glu-63–Tyr-105, Asn-115–Ala-154, Glu-162–Glu-205, Asn-207–Gly-249, Ala-257–Lys-297, and Leu-319–Ile-357.

As to quaternary structure, component of the PAQosome complex which is responsible for the biogenesis of several protein complexes and which consists of R2TP complex members RUVBL1, RUVBL2, RPAP3 and PIH1D1, URI complex members PFDN2, PFDN6, PDRG1, UXT and URI1 as well as ASDURF, POLR2E and DNAAF10/WDR92. Interacts with PIH1D1; the interaction associates DNAAF10 with the R2TP complex. Interacts with several dynein axonemal assembly factors. In terms of tissue distribution, widely expressed with the highest expression in testis.

Its subcellular location is the dynein axonemal particle. Key assembly factor specifically required for the stability of axonemal dynein heavy chains in cytoplasm. This is Dynein axonemal assembly factor 10 from Homo sapiens (Human).